The following is a 285-amino-acid chain: Glutamate racemase (285 aa).

Substrate is bound by residues 30-31 and 62-63; these read DS and YG. C94 acts as the Proton donor/acceptor in catalysis. 95 to 96 provides a ligand contact to substrate; sequence NT. The active-site Proton donor/acceptor is the C206. 207 to 208 serves as a coordination point for substrate; sequence TH.

This sequence belongs to the aspartate/glutamate racemases family.

The catalysed reaction is L-glutamate = D-glutamate. Its pathway is cell wall biogenesis; peptidoglycan biosynthesis. Functionally, provides the (R)-glutamate required for cell wall biosynthesis. This chain is Glutamate racemase, found in Pectobacterium atrosepticum (strain SCRI 1043 / ATCC BAA-672) (Erwinia carotovora subsp. atroseptica).